The primary structure comprises 133 residues: Large ribosomal subunit protein bL17 (133 aa).

It belongs to the bacterial ribosomal protein bL17 family. Part of the 50S ribosomal subunit. Contacts protein L32.

In Thermodesulfovibrio yellowstonii (strain ATCC 51303 / DSM 11347 / YP87), this protein is Large ribosomal subunit protein bL17.